Consider the following 267-residue polypeptide: Tryptophan synthase alpha chain (267 aa).

Residues E47 and D58 each act as proton acceptor in the active site.

This sequence belongs to the TrpA family. In terms of assembly, tetramer of two alpha and two beta chains.

The enzyme catalyses (1S,2R)-1-C-(indol-3-yl)glycerol 3-phosphate + L-serine = D-glyceraldehyde 3-phosphate + L-tryptophan + H2O. It participates in amino-acid biosynthesis; L-tryptophan biosynthesis; L-tryptophan from chorismate: step 5/5. Its function is as follows. The alpha subunit is responsible for the aldol cleavage of indoleglycerol phosphate to indole and glyceraldehyde 3-phosphate. This chain is Tryptophan synthase alpha chain, found in Chlorobium phaeobacteroides (strain DSM 266 / SMG 266 / 2430).